The chain runs to 82 residues: MIKQLQHALELQRNAWNNGHENYGASIDVEAEALEILRYFKHLNPAQTALAAELQEKDELKYAKPLASAARKAVRHFVVTLK.

The protein belongs to the T4likevirus lysis inhibition accessory protein rIII family. In terms of assembly, homooligomer. Interacts with holin (via N-terminus).

Functionally, probably binds to the cytoplasmic part of the holin during lysis inhibition and stabilizes the holin-antiholin complex thereby resulting in a robust block of the hole formation. This is Lysis inhibition accessory protein (rIII) from Escherichia coli (Bacteriophage T4).